A 321-amino-acid chain; its full sequence is Lipoyl synthase (321 aa).

[4Fe-4S] cluster-binding residues include cysteine 68, cysteine 73, cysteine 79, cysteine 94, cysteine 98, cysteine 101, and serine 308. The region spanning 80–297 (FNHGTATFMI…KAEALAMGFT (218 aa)) is the Radical SAM core domain.

The protein belongs to the radical SAM superfamily. Lipoyl synthase family. It depends on [4Fe-4S] cluster as a cofactor.

It localises to the cytoplasm. The enzyme catalyses [[Fe-S] cluster scaffold protein carrying a second [4Fe-4S](2+) cluster] + N(6)-octanoyl-L-lysyl-[protein] + 2 oxidized [2Fe-2S]-[ferredoxin] + 2 S-adenosyl-L-methionine + 4 H(+) = [[Fe-S] cluster scaffold protein] + N(6)-[(R)-dihydrolipoyl]-L-lysyl-[protein] + 4 Fe(3+) + 2 hydrogen sulfide + 2 5'-deoxyadenosine + 2 L-methionine + 2 reduced [2Fe-2S]-[ferredoxin]. The protein operates within protein modification; protein lipoylation via endogenous pathway; protein N(6)-(lipoyl)lysine from octanoyl-[acyl-carrier-protein]: step 2/2. Its function is as follows. Catalyzes the radical-mediated insertion of two sulfur atoms into the C-6 and C-8 positions of the octanoyl moiety bound to the lipoyl domains of lipoate-dependent enzymes, thereby converting the octanoylated domains into lipoylated derivatives. This Salmonella paratyphi A (strain AKU_12601) protein is Lipoyl synthase.